The primary structure comprises 132 residues: Small ribosomal subunit protein uS8 (132 aa).

Belongs to the universal ribosomal protein uS8 family. In terms of assembly, part of the 30S ribosomal subunit. Contacts proteins S5 and S12.

In terms of biological role, one of the primary rRNA binding proteins, it binds directly to 16S rRNA central domain where it helps coordinate assembly of the platform of the 30S subunit. The sequence is that of Small ribosomal subunit protein uS8 from Mycobacterium sp. (strain KMS).